The sequence spans 172 residues: Peroxiredoxin AHP1 (172 aa).

The region spanning 4 to 171 (LQPGDSFPAN…VLTVLGNQGK (168 aa)) is the Thioredoxin domain. K44 participates in a covalent cross-link: Glycyl lysine isopeptide (Lys-Gly) (interchain with G-Cter in URM1). C60 serves as the catalytic Cysteine sulfenic acid (-SOH) intermediate. At C60 the chain carries Cysteine persulfide. Residues K63, K99, K141, K156, and K171 each participate in a glycyl lysine isopeptide (Lys-Gly) (interchain with G-Cter in URM1) cross-link.

This sequence belongs to the peroxiredoxin family. Prx5 subfamily. As to quaternary structure, homodimer; disulfide-linked, upon oxidation. Post-translationally, conjugated to URM1, a ubiquitin-like protein, in response to oxidative stresses. The attachment of URM1 to lysine residues exclusively depends on the presence of a peroxidatic cysteine in the target protein, with low specificity for the particular residue, motif, or structural context at which urmylation can occur. The URM1-conjugation reaction is mechanistically and directly coupled to the process of cysteine persulfidation, transfering the sulfur atom of the URM1 thiocarboxyl group to redox-active cysteine residues in the target protein if it is exposed to oxidative conditions. Persulfidated on specific redox-active cysteine residues. Persulfidation (also called protein S-sulfhydration) may provide a molecular mechanism that enables cells to protect vulnerable cysteine residues from reactive oxygen species (ROS) under stress conditions.

The protein resides in the cytoplasm. It catalyses the reaction a hydroperoxide + [thioredoxin]-dithiol = an alcohol + [thioredoxin]-disulfide + H2O. Its function is as follows. Thiol-specific peroxidase that catalyzes the reduction of hydrogen peroxide and organic hydroperoxides to water and alcohols, respectively. Plays a role in cell protection against oxidative stress by detoxifying peroxides and as sensor of hydrogen peroxide-mediated signaling events. Preferentially eliminates organic peroxides rather than hydrogen peroxide. Relays alkyl hydroperoxides as a signal to the transcription factor CAD1/YAP2 by inducing the formation of intramolecular disulfide bonds in CAD1, which causes its nuclear accumulation and activation. Involved in cellular Mn(2+) homeostasis. In Chaetomium thermophilum (strain DSM 1495 / CBS 144.50 / IMI 039719) (Thermochaetoides thermophila), this protein is Peroxiredoxin AHP1 (AHP1).